A 376-amino-acid chain; its full sequence is DnaJ homolog subfamily B member 12 (376 aa).

Met-1 bears the N-acetylmethionine mark. Residues 45 to 97 (ALIESLNQKPQSTGDHPQPTDTTHTTTKKAGGTETPSANGEAGGGESAKGYTS) are disordered. A compositionally biased stretch (low complexity) spans 57–84 (TGDHPQPTDTTHTTTKKAGGTETPSANG). The 65-residue stretch at 111 to 175 (DYYEILGVSR…EKRKQYDQFG (65 aa)) folds into the J domain. Residue His-186 is modified to Pros-methylhistidine. A helical transmembrane segment spans residues 243 to 263 (GGLGVFVQLMPILILILVSAL).

The protein belongs to the DnaJ family. DNAJB12/DNAJB14 subfamily. As to quaternary structure, homodimer and homotetramer. Interacts (via J domain) with HSPA8/Hsc70. Forms a multiprotein complex, at least composed of DNAJB12, DNAJB14, HSPA8/Hsc70 and SGTA; interaction with DNAJB14 and HSPA8/Hsc70 is direct. Post-translationally, methylated at His-186 by METTL9.

The protein localises to the endoplasmic reticulum membrane. It is found in the nucleus membrane. Acts as a co-chaperone with HSPA8/Hsc70; required to promote protein folding and trafficking, prevent aggregation of client proteins, and promote unfolded proteins to endoplasmic reticulum-associated degradation (ERAD) pathway. Acts by determining HSPA8/Hsc70's ATPase and polypeptide-binding activities. Can also act independently of HSPA8/Hsc70: together with DNAJB14, acts as a chaperone that promotes maturation of potassium channels KCND2 and KCNH2 by stabilizing nascent channel subunits and assembling them into tetramers. While stabilization of nascent channel proteins is dependent on HSPA8/Hsc70, the process of oligomerization of channel subunits is independent of HSPA8/Hsc70. When overexpressed, forms membranous structures together with DNAJB14 and HSPA8/Hsc70 within the nucleus; the role of these structures, named DJANGOs, is still unclear. This chain is DnaJ homolog subfamily B member 12, found in Mus musculus (Mouse).